Reading from the N-terminus, the 1034-residue chain is Mediator of RNA polymerase II transcription subunit 15 (1034 aa).

Composition is skewed to low complexity over residues 101 to 123 (QRQQ…QQQA), 138 to 149 (QQAQARQQAQRQ), 157 to 183 (QQQQ…QLTL), 281 to 312 (MNQV…QPQH), 413 to 441 (QQIP…SRRQ), 459 to 490 (PQPQ…QQQQ), and 655 to 675 (QSQT…QQPI). Disordered stretches follow at residues 101-124 (QRQQ…QQAN), 138-183 (QQAQ…QLTL), 281-315 (MNQV…HQEP), 413-497 (QQIP…SVPR), 655-682 (QSQT…NNNS), 712-804 (SAIS…NPYK), and 951-1020 (ISPT…ESTD). Composition is skewed to polar residues over residues 738 to 764 (NSQS…TATP) and 772 to 802 (PMFN…QDNP). Residues 962–971 (SESKKVKFDS) show a composition bias toward basic and acidic residues. Residues 998–1020 (SINSKPSIPSSAGNMPAPNESTD) show a composition bias toward polar residues.

The protein belongs to the Mediator complex subunit 15 family. As to quaternary structure, component of the Mediator complex.

The protein localises to the nucleus. Its function is as follows. Component of the Mediator complex, a coactivator involved in the regulated transcription of nearly all RNA polymerase II-dependent genes. Mediator functions as a bridge to convey information from gene-specific regulatory proteins to the basal RNA polymerase II transcription machinery. Mediator is recruited to promoters by direct interactions with regulatory proteins and serves as a scaffold for the assembly of a functional preinitiation complex with RNA polymerase II and the general transcription factors. Required for transcription of genes encoding galactose-metabolizing enzymes. Essential for normal growth on nonfermentable carbon sources, for sporulation and mating. This Kluyveromyces lactis (strain ATCC 8585 / CBS 2359 / DSM 70799 / NBRC 1267 / NRRL Y-1140 / WM37) (Yeast) protein is Mediator of RNA polymerase II transcription subunit 15 (GAL11).